The sequence spans 567 residues: Urease subunit alpha (567 aa).

One can recognise a Urease domain in the interval 129 to 567 (GGIDTHIHFI…LPMAQRYFLF (439 aa)). Residues histidine 134, histidine 136, and lysine 217 each coordinate Ni(2+). Position 217 is an N6-carboxylysine (lysine 217). Histidine 219 lines the substrate pocket. Ni(2+) is bound by residues histidine 246 and histidine 272. The active-site Proton donor is histidine 320. Residue aspartate 360 participates in Ni(2+) binding.

Belongs to the metallo-dependent hydrolases superfamily. Urease alpha subunit family. Probable heterotrimer of UreA (gamma), UreB (beta) and UreC (alpha) subunits. Three heterotrimers associate to form the active enzyme. The trimeric urease interacts with an accessory complex composed of UreD, UreF and UreG, which is required for the assembly of the nickel containing metallocenter of UreC. The UreE protein may also play a direct role in nickel transfer to the urease apoprotein. Requires Ni cation as cofactor. Post-translationally, carboxylation allows a single lysine to coordinate two nickel ions.

Its subcellular location is the cytoplasm. It carries out the reaction urea + 2 H2O + H(+) = hydrogencarbonate + 2 NH4(+). It participates in nitrogen metabolism; urea degradation; CO(2) and NH(3) from urea (urease route): step 1/1. The chain is Urease subunit alpha from Proteus mirabilis (strain HI4320).